We begin with the raw amino-acid sequence, 660 residues long: Putative ABC transporter ATP-binding MG390 homolog (660 aa).

The Peptidase C39 domain occupies 6–126 (QEQPNECGIC…KQWTGYAATV (121 aa)). Residue Cys-12 is part of the active site. The next 6 membrane-spanning stretches (helical) occupy residues 150-170 (LIIF…LLAT), 188-208 (IVVF…LYAL), 265-285 (HIPN…LIGI), 290-310 (FLWI…YDFF), 379-399 (SFAQ…GIIE), and 402-422 (YTLA…AYAT). The region spanning 464–660 (INLNNCSITL…INLSPYLQQT (197 aa)) is the ABC transporter domain. An ATP-binding site is contributed by 494–501 (GENGSGKS).

Belongs to the ABC transporter superfamily.

The protein resides in the cell membrane. This chain is Putative ABC transporter ATP-binding MG390 homolog, found in Mycoplasma pneumoniae (strain ATCC 29342 / M129 / Subtype 1) (Mycoplasmoides pneumoniae).